Reading from the N-terminus, the 529-residue chain is Snake venom 5'-nucleotidase (529 aa).

A signal peptide is located at residue Gly-1. Asp-12 and His-14 together coordinate Zn(2+). Residues Cys-27 and Cys-32 are joined by a disulfide bond. The Zn(2+) site is built by Asp-60, Asn-92, His-195, and His-218. Asn-308 and Asn-322 each carry an N-linked (GlcNAc...) asparagine glycan. 2 cysteine pairs are disulfide-bonded: Cys-328/Cys-333 and Cys-340/Cys-362. Arg-329 contacts AMP. Residues Asn-365, Arg-370, and Phe-393 each contribute to the AMP site. A disulfide bridge connects residues Cys-452 and Cys-455. AMP contacts are provided by Phe-476 and Asp-482. Ser-525 is lipidated: GPI-anchor amidated serine. Positions 526–529 are cleaved as a propeptide — removed in mature form; that stretch reads AGSL.

Belongs to the 5'-nucleotidase family. The cofactor is Zn(2+). Venom 5'-nucleotidases (or a part thereof) may be released into the venom via exosome-like vesicles. They may be attached via a GPI anchor to the membrane of these vesicles. Soluble forms of 5'-nucleotidase might be released by cleavage of the ectodomain in the exosome-like vesicles or venom gland cells. As to expression, expressed by the venom gland.

It is found in the membrane. The catalysed reaction is a ribonucleoside 5'-phosphate + H2O = a ribonucleoside + phosphate. In terms of biological role, hydrolyzes nucleotides into nucleosides. Snake venom 5'-nucleotidases are widely distributed among venomous snake taxa, but there is a lack of information about their biological activities. They have been shown to inhibit platelet aggregation. This effect may be due to the liberation of inhibitory AMP or adenosine by its action on ADP released upon initiation of aggregation. Venom 5'-nucleotidases are also known to synergistically act in vivo with other toxins like ADPases, phospholipases, and disintegrins to exert a more pronounced anti-coagulant effect. The protein is Snake venom 5'-nucleotidase of Naja atra (Chinese cobra).